The primary structure comprises 697 residues: PHD finger protein At1g33420 (697 aa).

Residues 603 to 653 (KVDCKCGTKDDDGERMLACDGCGVWHHTRCIGINNADALPSKFLCFRCIEL) form a PHD-type zinc finger.

The protein resides in the nucleus. This chain is PHD finger protein At1g33420, found in Arabidopsis thaliana (Mouse-ear cress).